Here is a 278-residue protein sequence, read N- to C-terminus: Polyamine aminopropyltransferase (278 aa).

Residues 5–238 (ELWFTEQQTP…GLWSFTMGSK (234 aa)) enclose the PABS domain. Glutamine 34 serves as a coordination point for S-methyl-5'-thioadenosine. Spermidine is bound by residues histidine 65 and aspartate 89. Residues glutamate 109 and 140–141 (DG) each bind S-methyl-5'-thioadenosine. Catalysis depends on aspartate 158, which acts as the Proton acceptor. A spermidine-binding site is contributed by 158–161 (DSTD). Proline 165 contacts S-methyl-5'-thioadenosine.

This sequence belongs to the spermidine/spermine synthase family. In terms of assembly, homodimer or homotetramer.

Its subcellular location is the cytoplasm. The catalysed reaction is S-adenosyl 3-(methylsulfanyl)propylamine + putrescine = S-methyl-5'-thioadenosine + spermidine + H(+). It functions in the pathway amine and polyamine biosynthesis; spermidine biosynthesis; spermidine from putrescine: step 1/1. Catalyzes the irreversible transfer of a propylamine group from the amino donor S-adenosylmethioninamine (decarboxy-AdoMet) to putrescine (1,4-diaminobutane) to yield spermidine. The polypeptide is Polyamine aminopropyltransferase (Caldicellulosiruptor saccharolyticus (strain ATCC 43494 / DSM 8903 / Tp8T 6331)).